A 317-amino-acid polypeptide reads, in one-letter code: Melanoma-associated antigen 4 (317 aa).

Basic and acidic residues predominate over residues 1 to 14 (MSSEQKSQHCKPEE). The segment at 1–102 (MSSEQKSQHC…EEGPSTSPDA (102 aa)) is disordered. A compositionally biased stretch (polar residues) spans 66–82 (PQGASALPTTISFTCWR). The MAGE domain maps to 110 to 309 (LSNKVDELAH…IAYPSLREAA (200 aa)).

Expressed in many tumors of several types, such as melanoma, head and neck squamous cell carcinoma, lung carcinoma and breast carcinoma, but not in normal tissues except for testes and placenta.

Functionally, regulates cell proliferation through the inhibition of cell cycle arrest at the G1 phase. Also negatively regulates p53-mediated apoptosis. The chain is Melanoma-associated antigen 4 (MAGEA4) from Homo sapiens (Human).